Reading from the N-terminus, the 423-residue chain is Adenylosuccinate synthetase (423 aa).

GTP is bound by residues 13 to 19 (GDEGKGK) and 41 to 43 (GHT). The active-site Proton acceptor is Asp14. Mg(2+) is bound by residues Asp14 and Gly41. IMP contacts are provided by residues 14-17 (DEGK), 39-42 (NAGH), Thr130, Arg144, Gln223, Thr238, and Arg302. His42 (proton donor) is an active-site residue. Residue 298-304 (SVTGRKR) coordinates substrate. GTP-binding positions include Arg304 and 410–412 (SVG).

Belongs to the adenylosuccinate synthetase family. As to quaternary structure, homodimer. Mg(2+) serves as cofactor.

The protein resides in the cytoplasm. It catalyses the reaction IMP + L-aspartate + GTP = N(6)-(1,2-dicarboxyethyl)-AMP + GDP + phosphate + 2 H(+). The protein operates within purine metabolism; AMP biosynthesis via de novo pathway; AMP from IMP: step 1/2. Plays an important role in the de novo pathway of purine nucleotide biosynthesis. Catalyzes the first committed step in the biosynthesis of AMP from IMP. The protein is Adenylosuccinate synthetase of Porphyromonas gingivalis (strain ATCC BAA-308 / W83).